Here is a 177-residue protein sequence, read N- to C-terminus: UPF0340 protein STH78 (177 aa).

Belongs to the UPF0340 family.

In Symbiobacterium thermophilum (strain DSM 24528 / JCM 14929 / IAM 14863 / T), this protein is UPF0340 protein STH78.